The following is a 295-amino-acid chain: Small ribosomal subunit protein uS2 (295 aa).

At Ser2 the chain carries N-acetylserine. Ser43 is modified (phosphoserine). Lys52 bears the N6-acetyllysine mark. The interaction with PPP1R16B stretch occupies residues 54–113 (TWEKLLLAARAIVAIENPADVSVISSRNTGQRAVLKFAAATGATPIAGRFTPGTFTNQIQ). An N6-acetyllysine; alternate modification is found at Lys89. Lys89 is covalently cross-linked (Glycyl lysine isopeptide (Lys-Gly) (interchain with G-Cter in SUMO2); alternate). A Phosphothreonine modification is found at Thr97. 2 laminin-binding regions span residues 161-180 (IPCN…MLAR) and 205-229 (RDPE…EFQG). Over residues 214–227 (EQAAAEKAVTKEEF) the composition is skewed to basic and acidic residues. The segment at 214–240 (EQAAAEKAVTKEEFQGEWTAPAPEFTA) is disordered. 4 [DE]-W-[ST] repeats span residues 230–232 (EWT), 247–249 (DWS), 266–268 (DWS), and 275–277 (DWS). Residues 242 to 295 (QPEVADWSEGVQVPSVPIQQFPTEDWSARPFTEDWSAAPTAQATEWVGTTSELS) form a laminin-binding region. Positions 263 to 295 (PTEDWSARPFTEDWSAAPTAQATEWVGTTSELS) are disordered. The span at 280–295 (PTAQATEWVGTTSELS) shows a compositional bias: polar residues.

It belongs to the universal ribosomal protein uS2 family. Monomer (37LRP) and homodimer (67LR). Component of the small ribosomal subunit. Mature ribosomes consist of a small (40S) and a large (60S) subunit. The 40S subunit contains about 33 different proteins and 1 molecule of RNA (18S). The 60S subunit contains about 49 different proteins and 3 molecules of RNA (28S, 5.8S and 5S). Interacts with RPS21. Interacts with several laminins including at least LAMB1. Interacts with MDK. The mature dimeric form interacts with PPP1R16B (via its fourth ankyrin repeat). Interacts with PPP1CA only in the presence of PPP1R16B. Acylated. Acylation may be a prerequisite for conversion of the monomeric 37 kDa laminin receptor precursor (37LRP) to the mature dimeric 67 kDa laminin receptor (67LR), and may provide a mechanism for membrane association. Post-translationally, cleaved by stromelysin-3 (ST3) at the cell surface. Cleavage by stromelysin-3 may be a mechanism to alter cell-extracellular matrix interactions.

It is found in the cell membrane. The protein localises to the cytoplasm. The protein resides in the nucleus. Its function is as follows. Required for the assembly and/or stability of the 40S ribosomal subunit. Required for the processing of the 20S rRNA-precursor to mature 18S rRNA in a late step of the maturation of 40S ribosomal subunits. Also functions as a cell surface receptor for laminin. Plays a role in cell adhesion to the basement membrane and in the consequent activation of signaling transduction pathways. May play a role in cell fate determination and tissue morphogenesis. Also acts as a receptor for several other ligands, including the pathogenic prion protein, viruses, and bacteria. Acts as a PPP1R16B-dependent substrate of PPP1CA. This Ovis aries (Sheep) protein is Small ribosomal subunit protein uS2.